We begin with the raw amino-acid sequence, 400 residues long: Glutamyl-tRNA reductase (400 aa).

Substrate contacts are provided by residues 45–48, Ser-103, 108–110, and Gln-114; these read TCNR and EDQ. Cys-46 functions as the Nucleophile in the catalytic mechanism. NADP(+) is bound at residue 179–184; the sequence is GYGEIG.

It belongs to the glutamyl-tRNA reductase family. In terms of assembly, homodimer.

It carries out the reaction (S)-4-amino-5-oxopentanoate + tRNA(Glu) + NADP(+) = L-glutamyl-tRNA(Glu) + NADPH + H(+). It functions in the pathway porphyrin-containing compound metabolism; protoporphyrin-IX biosynthesis; 5-aminolevulinate from L-glutamyl-tRNA(Glu): step 1/2. Its function is as follows. Catalyzes the NADPH-dependent reduction of glutamyl-tRNA(Glu) to glutamate 1-semialdehyde (GSA). This chain is Glutamyl-tRNA reductase, found in Clostridium perfringens (strain SM101 / Type A).